A 493-amino-acid chain; its full sequence is 3-octaprenyl-4-hydroxybenzoate carboxy-lyase (493 aa).

Residue Asn172 participates in Mn(2+) binding. Residues 175-177 (IYR), 189-191 (RWL), and 194-195 (RG) each bind prenylated FMN. Glu238 lines the Mn(2+) pocket. Asp287 serves as the catalytic Proton donor.

This sequence belongs to the UbiD family. In terms of assembly, homohexamer. The cofactor is prenylated FMN. Requires Mn(2+) as cofactor.

The protein localises to the cell membrane. It carries out the reaction a 4-hydroxy-3-(all-trans-polyprenyl)benzoate + H(+) = a 2-(all-trans-polyprenyl)phenol + CO2. The protein operates within cofactor biosynthesis; ubiquinone biosynthesis. Its function is as follows. Catalyzes the decarboxylation of 3-octaprenyl-4-hydroxy benzoate to 2-octaprenylphenol, an intermediate step in ubiquinone biosynthesis. This is 3-octaprenyl-4-hydroxybenzoate carboxy-lyase from Shewanella putrefaciens (strain CN-32 / ATCC BAA-453).